Consider the following 370-residue polypeptide: Alpha-ketoglutarate-dependent dioxygenase cnsP (370 aa).

The span at 1–12 (MSTTTVITPGTI) shows a compositional bias: low complexity. The segment at 1–20 (MSTTTVITPGTITREKNENG) is disordered. His131 is a binding site for substrate. Positions 169 and 171 each coordinate Fe cation. A 2-oxoglutarate-binding site is contributed by Thr197. His321 serves as a coordination point for Fe cation. 2-oxoglutarate is bound by residues Arg333 and Arg337. Substrate is bound at residue Arg337.

Belongs to the TfdA dioxygenase family. The cofactor is Fe(2+).

The protein operates within alkaloid biosynthesis. Functionally, alpha-ketoglutarate-dependent dioxygenase; part of the gene cluster that mediates the biosynthesis of communesins, a prominent class of indole alkaloids with great potential as pharmaceuticals. Communesins are biosynthesized by the coupling of tryptamine and aurantioclavine, two building blocks derived from L-tryptophan. The L-tryptophan decarboxylase cnsB converts L-tryptophan to tryptamine, whereas the tryptophan dimethylallyltransferase cnsF converts L-tryptophan to 4-dimethylallyl tryptophan which is further transformed to aurantioclavine by the aurantioclavine synthase cnsA, probably aided by the catalase cnsD. The cytochrome P450 monooxygenase cnsC catalyzes the heterodimeric coupling between the two different indole moieties, tryptamine and aurantioclavine, to construct vicinal quaternary stereocenters and yield the heptacyclic communesin scaffold. The O-methyltransferase cnsE then methylates the communesin scaffold to produce communesin K, the simplest characterized communesin that contains the heptacyclic core. The dioxygenase cnsJ converts communesin K into communesin I. Acylation to introduce the hexadienyl group at position N16 of communesin I by the acyltransferase cnsK leads to the production of communesin B. The hexadienyl group is produced by the highly reducing polyketide synthase cnsI, before being hydrolytically removed from cnsI by the serine hydrolase cnsH, converted into hexadienyl-CoA by the CoA ligase cnsG, and then transferred to communesin I by cnsK. Surprisingly, cnsK may also be a promiscuous acyltransferase that can tolerate a range of acyl groups, including acetyl-, propionyl-, and butyryl-CoA, which lead to communesins A, G and H respectively. The roles of the alpha-ketoglutarate-dependent dioxygenases cnsM and cnsP have still to be determined. This Penicillium expansum (Blue mold rot fungus) protein is Alpha-ketoglutarate-dependent dioxygenase cnsP.